Reading from the N-terminus, the 746-residue chain is Zinc finger protein 366 (746 aa).

The tract at residues 1 to 64 is disordered; that stretch reads MQKAMKMVKD…FRYEPSPGDL (64 aa). 11 C2H2-type zinc fingers span residues 250 to 272, 278 to 300, 306 to 328, 334 to 356, 362 to 384, 390 to 412, 418 to 440, 446 to 468, 474 to 496, 502 to 524, and 530 to 553; these read WQCPTCEKSYTSKYNLVTHILGH, HACSRCGKLFKQLSHLHTHMLTH, HKCQVCHKAFTQTSHLKRHMMQH, HNCRVCSRGFAYPSELKAHEAKH, NICVECGLDFPTLAQLKRHLTTH, YNCSECDKTFQYPSQLQNHMMKH, YICSECGMEFVQPHHLKQHSLTH, HKCGICGREFTLLANMKRHVLIH, YQCHLCYKSFVQKQTLKAHMIVH, FKCKLCGKEFNRMHNLMGHLHLH, and FKCLYCPSKFTLKGNLTRHMKVKH. Residues 452 to 746 form an interaction with NRIP1 region; the sequence is GREFTLLANM…MEKQAVLLGI (295 aa). Positions 587-591 match the PXDLS motif; sequence PFDLS. Residues 587–689 form a disordered region; it reads PFDLSQKRSA…DHEGSDIDCE (103 aa). The span at 613–627 shows a compositional bias: acidic residues; it reads CQEEEEEAGEEDNCY. A compositionally biased stretch (basic and acidic residues) spans 675–689; sequence EDRSEDHEGSDIDCE.

In terms of assembly, interacts with ESR1 and NRIP1. Interacts (via PXDLS motif) with CTBP1. In terms of tissue distribution, expressed in immature and mature dendritic cells (DCs).

Its subcellular location is the nucleus. Has transcriptional repression activity. Acts as a corepressor of ESR1; the function seems to involve CTBP1 and histone deacetylases. The sequence is that of Zinc finger protein 366 from Mus musculus (Mouse).